Here is a 207-residue protein sequence, read N- to C-terminus: Protein lin-7 homolog B (207 aa).

Positions methionine 1–aspartate 13 match the Kinase interacting site motif. The L27 domain occupies leucine 10–glycine 65. The PDZ domain maps to valine 93 to proline 175. The segment at lysine 187–glycine 207 is disordered. Polar residues predominate over residues histidine 198 to glycine 207.

The protein belongs to the lin-7 family. In terms of assembly, forms a complex with CASK and CASKIN1. Component of the brain-specific heterotrimeric complex (LIN-10-LIN-2-LIN-7 complex) composed of at least APBA1, CASK, and LIN7, which associates with the motor protein KIF17 to transport vesicles along microtubules. Forms a heterotrimeric complex composed of MMP5, LIN7B and PATJ; the N-terminal L27 domain of PALS1 interacts with the L27 domain of PATJ and the C-terminal L27 domain of PALS1 interacts with the L27 domain of LIN7B. Forms a heterotrimeric complex with DLG1 and CASK via their L27 domains. Interacts with DLG4 and GRIN2B as well as CDH1 and CTNNB1, the channels KCNJ12/Kir2.2, KCNJ4/Kir2.3 and probably KCNJ2/Kir2.1 and SLC6A12/BGT-1 via its PDZ domain. The association of LIN7A with cadherin and beta-catenin is calcium-dependent, occurs at synaptic junctions and requires the actin cytoskeleton. Interacts with EGFR, ERBB2, ERBB3 and ERBB4 with both PDZ and KID domains. Associates with KIF17 via APBA1. Interacts with ASIC3. Interacts with TOPK. Interacts with RTKN. Interacts with APBA1. Interacts with MPP7. Interacts with DLG2. Interacts with DLG3. As to expression, expressed in the kidney; predominantly in the vasa recta.

The protein resides in the cell membrane. Its subcellular location is the basolateral cell membrane. It localises to the cell junction. It is found in the postsynaptic density membrane. The protein localises to the tight junction. Functionally, plays a role in establishing and maintaining the asymmetric distribution of channels and receptors at the plasma membrane of polarized cells. Forms membrane-associated multiprotein complexes that may regulate delivery and recycling of proteins to the correct membrane domains. The tripartite complex composed of LIN7 (LIN7A, LIN7B or LIN7C), CASK and APBA1 associates with the motor protein KIF17 to transport vesicles containing N-methyl-D-aspartate (NMDA) receptor subunit NR2B along microtubules. This complex may have the potential to couple synaptic vesicle exocytosis to cell adhesion in brain. Ensures the proper localization of GRIN2B (subunit 2B of the NMDA receptor) to neuronal postsynaptic density and may function in localizing synaptic vesicles at synapses where it is recruited by beta-catenin and cadherin. Required to localize Kir2 channels, GABA transporter (SLC6A12) and EGFR/ERBB1, ERBB2, ERBB3 and ERBB4 to the basolateral membrane of epithelial cells. May increase the amplitude of ASIC3 acid-evoked currents by stabilizing the channel at the cell surface. The sequence is that of Protein lin-7 homolog B (Lin7b) from Mus musculus (Mouse).